A 973-amino-acid chain; its full sequence is Vacuolar membrane protease (973 aa).

At Met1 to Pro15 the chain is on the cytoplasmic side. A helical transmembrane segment spans residues Trp16–Val36. Over Gln37–Thr383 the chain is Vacuolar. 2 N-linked (GlcNAc...) asparagine glycosylation sites follow: Asn52 and Asn115. Zn(2+) contacts are provided by His167 and Asp179. The active-site Proton acceptor is the Glu213. Zn(2+) is bound by residues Glu214, Glu239, and His312. A helical transmembrane segment spans residues Leu384 to Ile404. Topologically, residues Ala405–Gly438 are cytoplasmic. The helical transmembrane segment at Phe439 to Leu459 threads the bilayer. At Val460–His469 the chain is on the vacuolar side. The helical transmembrane segment at Ser470–Val490 threads the bilayer. Residues Ser491–Arg504 lie on the Cytoplasmic side of the membrane. A helical membrane pass occupies residues Val505–Tyr525. The Vacuolar portion of the chain corresponds to Glu526–Tyr529. The chain crosses the membrane as a helical span at residues Gly530 to Ile550. The Cytoplasmic segment spans residues Ser551–Gln674. Positions Ser572–Arg623 are disordered. Residues Tyr574 to Gly587 show a composition bias toward polar residues. Acidic residues predominate over residues Asp593–Glu607. The helical transmembrane segment at Phe675–Ala695 threads the bilayer. Over Ala696–Leu708 the chain is Vacuolar. A helical transmembrane segment spans residues Phe709–Ile729. Topologically, residues His730–His735 are cytoplasmic. Residues Ile736–Pro756 form a helical membrane-spanning segment. At Phe757–Val973 the chain is on the vacuolar side. Asn803 and Asn839 each carry an N-linked (GlcNAc...) asparagine glycan.

This sequence belongs to the peptidase M28 family. It depends on Zn(2+) as a cofactor.

Its subcellular location is the vacuole membrane. In terms of biological role, may be involved in vacuolar sorting and osmoregulation. This is Vacuolar membrane protease from Aspergillus clavatus (strain ATCC 1007 / CBS 513.65 / DSM 816 / NCTC 3887 / NRRL 1 / QM 1276 / 107).